The chain runs to 126 residues: Large ribosomal subunit protein bL17 (126 aa).

Belongs to the bacterial ribosomal protein bL17 family. As to quaternary structure, part of the 50S ribosomal subunit. Contacts protein L32.

This Magnetococcus marinus (strain ATCC BAA-1437 / JCM 17883 / MC-1) protein is Large ribosomal subunit protein bL17.